The sequence spans 615 residues: Dihydroxy-acid dehydratase (615 aa).

Asp-81 contributes to the Mg(2+) binding site. [2Fe-2S] cluster is bound at residue Cys-122. Residues Asp-123 and Lys-124 each coordinate Mg(2+). The residue at position 124 (Lys-124) is an N6-carboxylysine. Residue Cys-193 coordinates [2Fe-2S] cluster. Glu-489 contacts Mg(2+). The Proton acceptor role is filled by Ser-515.

This sequence belongs to the IlvD/Edd family. In terms of assembly, homodimer. [2Fe-2S] cluster is required as a cofactor. It depends on Mg(2+) as a cofactor.

It carries out the reaction (2R)-2,3-dihydroxy-3-methylbutanoate = 3-methyl-2-oxobutanoate + H2O. The catalysed reaction is (2R,3R)-2,3-dihydroxy-3-methylpentanoate = (S)-3-methyl-2-oxopentanoate + H2O. The protein operates within amino-acid biosynthesis; L-isoleucine biosynthesis; L-isoleucine from 2-oxobutanoate: step 3/4. It participates in amino-acid biosynthesis; L-valine biosynthesis; L-valine from pyruvate: step 3/4. Its function is as follows. Functions in the biosynthesis of branched-chain amino acids. Catalyzes the dehydration of (2R,3R)-2,3-dihydroxy-3-methylpentanoate (2,3-dihydroxy-3-methylvalerate) into 2-oxo-3-methylpentanoate (2-oxo-3-methylvalerate) and of (2R)-2,3-dihydroxy-3-methylbutanoate (2,3-dihydroxyisovalerate) into 2-oxo-3-methylbutanoate (2-oxoisovalerate), the penultimate precursor to L-isoleucine and L-valine, respectively. This Pseudomonas syringae pv. syringae (strain B728a) protein is Dihydroxy-acid dehydratase.